The sequence spans 314 residues: Porphobilinogen deaminase (314 aa).

C249 is subject to S-(dipyrrolylmethanemethyl)cysteine.

Belongs to the HMBS family. In terms of assembly, monomer. Dipyrromethane is required as a cofactor.

The catalysed reaction is 4 porphobilinogen + H2O = hydroxymethylbilane + 4 NH4(+). The protein operates within porphyrin-containing compound metabolism; protoporphyrin-IX biosynthesis; coproporphyrinogen-III from 5-aminolevulinate: step 2/4. In terms of biological role, tetrapolymerization of the monopyrrole PBG into the hydroxymethylbilane pre-uroporphyrinogen in several discrete steps. The chain is Porphobilinogen deaminase from Brucella abortus (strain S19).